We begin with the raw amino-acid sequence, 533 residues long: Flavin-containing monooxygenase 5 (533 aa).

Position 5 is a dimethylated arginine (Arg5). FAD-binding positions include 10–14 (GAGAS), Glu33, and 41–42 (LW). Position 54 is a phosphoserine (Ser54). The residue at position 56 (Tyr56) is a Phosphotyrosine. Ser58 is modified (phosphoserine). FAD is bound at residue 62–63 (NT). NADP(+) is bound at residue 196–199 (SGGD). The residue at position 280 (Ser280) is a Phosphoserine. Residue Thr284 is modified to Phosphothreonine. Ser401 carries the post-translational modification Phosphoserine. A helical membrane pass occupies residues 513–533 (LVTVRVLMLAVAFFAVILAYF).

Belongs to the FMO family. The cofactor is FAD. Expressed in liver (at protein level). Expressed in the mucosal epithelium of the gastrointestinal tract.

The protein localises to the microsome membrane. It localises to the endoplasmic reticulum membrane. The enzyme catalyses N,N-dimethylaniline + NADPH + O2 + H(+) = N,N-dimethylaniline N-oxide + NADP(+) + H2O. It carries out the reaction NADPH + O2 + H(+) = H2O2 + NADP(+). It catalyses the reaction heptan-2-one + NADPH + O2 + H(+) = pentyl acetate + NADP(+) + H2O. The catalysed reaction is octan-3-one + NADPH + O2 + H(+) = pentyl propanoate + NADP(+) + H2O. The enzyme catalyses octan-3-one + NADPH + O2 + H(+) = ethyl hexanoate + NADP(+) + H2O. It carries out the reaction hexan-3-one + NADPH + O2 + H(+) = ethyl butanoate + NADP(+) + H2O. It catalyses the reaction hexan-3-one + NADPH + O2 + H(+) = propyl propanoate + NADP(+) + H2O. The catalysed reaction is heptan-4-one + NADPH + O2 + H(+) = propyl butanoate + NADP(+) + H2O. The enzyme catalyses (2E)-geranial + NADPH + O2 + H(+) = (1E)-2,6-dimethylhepta-1,5-dien-1-yl formate + NADP(+) + H2O. It carries out the reaction sulcatone + NADPH + O2 + H(+) = 4-methylpent-3-en-1-yl acetate + NADP(+) + H2O. Acts as a Baeyer-Villiger monooxygenase on a broad range of substrates. Catalyzes the insertion of an oxygen atom into a carbon-carbon bond adjacent to a carbonyl, which converts ketones to esters. Active on diverse carbonyl compounds, whereas soft nucleophiles are mostly non- or poorly reactive. In contrast with other forms of FMO it is non- or poorly active on 'classical' substrates such as drugs, pesticides, and dietary components containing soft nucleophilic heteroatoms. Able to oxidize drug molecules bearing a carbonyl group on an aliphatic chain, such as nabumetone and pentoxifylline. Also, in the absence of substrates, shows slow but yet significant NADPH oxidase activity. Acts as a positive modulator of cholesterol biosynthesis as well as glucose homeostasis, promoting metabolic aging via pleiotropic effects. This Mus musculus (Mouse) protein is Flavin-containing monooxygenase 5.